An 89-amino-acid chain; its full sequence is Small ribosomal subunit protein uS15 (89 aa).

It belongs to the universal ribosomal protein uS15 family. In terms of assembly, part of the 30S ribosomal subunit. Forms a bridge to the 50S subunit in the 70S ribosome, contacting the 23S rRNA.

One of the primary rRNA binding proteins, it binds directly to 16S rRNA where it helps nucleate assembly of the platform of the 30S subunit by binding and bridging several RNA helices of the 16S rRNA. In terms of biological role, forms an intersubunit bridge (bridge B4) with the 23S rRNA of the 50S subunit in the ribosome. The polypeptide is Small ribosomal subunit protein uS15 (Paramagnetospirillum magneticum (strain ATCC 700264 / AMB-1) (Magnetospirillum magneticum)).